Reading from the N-terminus, the 156-residue chain is Xanthocillin biosynthesis cluster protein D (156 aa).

N-linked (GlcNAc...) asparagine glycans are attached at residues Asn107 and Asn120. Residues 131–153 (IHLNAIALVATVWYGFTLSSSLL) form a helical membrane-spanning segment.

It is found in the membrane. Its pathway is secondary metabolite biosynthesis. Part of the gene cluster that mediates the biosynthesis of the isocyanide xanthocillin and its derivatives. The first step of the pathway consists in the conversion of tyrosine into a vinyl-isonitrile intermediate by the isocyanide synthase xanB. Subsequent oxidative dimerization of this intermediate to form xanthocillin may involve the cytochrome P450 monooxygenase xanG, whose expression is coregulated with that of XanB. Xanthocillin can be further modified by the isonitrile hydratase-like protein xanA which introduces N-formyl groups and the methyltransferase xanE which introduces methyl groups, leading to the production of several derivatives including fumiformamide. Finally, fumiformamide can be subject to both oxidative and reductive cyclization to yield melanocins E and F, respectively. This is Xanthocillin biosynthesis cluster protein D from Aspergillus fumigatus (strain ATCC MYA-4609 / CBS 101355 / FGSC A1100 / Af293) (Neosartorya fumigata).